The following is a 372-amino-acid chain: Glutamate 5-kinase (372 aa).

Residue lysine 14 coordinates ATP. Substrate contacts are provided by serine 54, aspartate 141, and asparagine 153. ATP is bound by residues 173-174 (TD) and 215-221 (SGGMLTK). One can recognise a PUA domain in the interval 280 to 358 (AGKVVVDEGA…HEIEHILGYI (79 aa)).

The protein belongs to the glutamate 5-kinase family.

The protein resides in the cytoplasm. The enzyme catalyses L-glutamate + ATP = L-glutamyl 5-phosphate + ADP. It functions in the pathway amino-acid biosynthesis; L-proline biosynthesis; L-glutamate 5-semialdehyde from L-glutamate: step 1/2. In terms of biological role, catalyzes the transfer of a phosphate group to glutamate to form L-glutamate 5-phosphate. The polypeptide is Glutamate 5-kinase (Methylobacillus flagellatus (strain ATCC 51484 / DSM 6875 / VKM B-1610 / KT)).